The primary structure comprises 299 residues: tRNA pseudouridine synthase B (299 aa).

Residue aspartate 45 is the Nucleophile of the active site.

The protein belongs to the pseudouridine synthase TruB family. Type 1 subfamily.

The enzyme catalyses uridine(55) in tRNA = pseudouridine(55) in tRNA. In terms of biological role, responsible for synthesis of pseudouridine from uracil-55 in the psi GC loop of transfer RNAs. The protein is tRNA pseudouridine synthase B of Streptomyces griseus subsp. griseus (strain JCM 4626 / CBS 651.72 / NBRC 13350 / KCC S-0626 / ISP 5235).